A 716-amino-acid chain; its full sequence is Fatty acid oxidation complex subunit alpha (716 aa).

Residues 1 to 189 (MIYQSPTIQV…KVGAVDAVVA (189 aa)) form an enoyl-CoA hydratase/isomerase region. D296 serves as a coordination point for substrate. A 3-hydroxyacyl-CoA dehydrogenase region spans residues 311–716 (KDVKSAAVLG…AANNGSYYQA (406 aa)). Residues M324, D343, 400 to 402 (VVE), K407, and S429 contribute to the NAD(+) site. The active-site For 3-hydroxyacyl-CoA dehydrogenase activity is the H450. N453 contributes to the NAD(+) binding site. Substrate-binding residues include N500 and Y660.

The protein in the N-terminal section; belongs to the enoyl-CoA hydratase/isomerase family. It in the C-terminal section; belongs to the 3-hydroxyacyl-CoA dehydrogenase family. As to quaternary structure, heterotetramer of two alpha chains (FadB) and two beta chains (FadA).

The enzyme catalyses a (3S)-3-hydroxyacyl-CoA + NAD(+) = a 3-oxoacyl-CoA + NADH + H(+). It carries out the reaction a (3S)-3-hydroxyacyl-CoA = a (2E)-enoyl-CoA + H2O. It catalyses the reaction a 4-saturated-(3S)-3-hydroxyacyl-CoA = a (3E)-enoyl-CoA + H2O. The catalysed reaction is (3S)-3-hydroxybutanoyl-CoA = (3R)-3-hydroxybutanoyl-CoA. The enzyme catalyses a (3Z)-enoyl-CoA = a 4-saturated (2E)-enoyl-CoA. It carries out the reaction a (3E)-enoyl-CoA = a 4-saturated (2E)-enoyl-CoA. It participates in lipid metabolism; fatty acid beta-oxidation. Involved in the aerobic and anaerobic degradation of long-chain fatty acids via beta-oxidation cycle. Catalyzes the formation of 3-oxoacyl-CoA from enoyl-CoA via L-3-hydroxyacyl-CoA. It can also use D-3-hydroxyacyl-CoA and cis-3-enoyl-CoA as substrate. This is Fatty acid oxidation complex subunit alpha from Shewanella sp. (strain MR-7).